A 300-amino-acid chain; its full sequence is Ribosomal protein bS6--L-glutamate ligase (300 aa).

The ATP-grasp domain occupies Met-104 to Glu-287. ATP contacts are provided by residues Lys-141, Glu-178 to Tyr-179, Asp-187, and Arg-211 to Asn-213. Asp-248, Glu-260, and Asn-262 together coordinate Mg(2+). Asp-248, Glu-260, and Asn-262 together coordinate Mn(2+).

It belongs to the RimK family. The cofactor is Mg(2+). Mn(2+) serves as cofactor.

An L-glutamate ligase that catalyzes the ATP-dependent post-translational addition of glutamate residues to the C-terminus of ribosomal protein bS6 (RpsF). Is also able to catalyze the synthesis of poly-alpha-glutamate in vitro, via ATP hydrolysis from unprotected glutamate as substrate. The number of glutamate residues added to either RpsF or to poly-alpha-glutamate changes with pH. This chain is Ribosomal protein bS6--L-glutamate ligase, found in Shigella flexneri serotype 5b (strain 8401).